We begin with the raw amino-acid sequence, 476 residues long: Homeobox even-skipped homolog protein 2 (476 aa).

2 disordered regions span residues 82-113 (TGSE…AEAD) and 142-185 (KGYA…GSGA). Composition is skewed to low complexity over residues 84 to 96 (SEST…SSAA) and 147 to 159 (SGSA…SASG). The span at 160–183 (SGLGSLHGGSGGSGGSAALGGSGS) shows a compositional bias: gly residues. Positions 188–247 (VRRYRTAFTREQIARLEKEFYRENYVSRPRRCELAAALNLPETTIKVWFQNRRMKDKRQR) form a DNA-binding region, homeobox.

It belongs to the even-skipped homeobox family.

Its subcellular location is the nucleus. The chain is Homeobox even-skipped homolog protein 2 (EVX2) from Homo sapiens (Human).